A 234-amino-acid polypeptide reads, in one-letter code: Superoxide dismutase [Mn], mitochondrial (234 aa).

The transit peptide at 1-34 (MFSIRSSSRVLLKASSATTRATLNAAASKTFTRS) directs the protein to the mitochondrion. Residues histidine 60, histidine 108, aspartate 198, and histidine 202 each coordinate Mn(2+).

This sequence belongs to the iron/manganese superoxide dismutase family. Homotetramer. The cofactor is Mn(2+).

The protein localises to the mitochondrion matrix. The enzyme catalyses 2 superoxide + 2 H(+) = H2O2 + O2. Functionally, destroys superoxide anion radicals which are normally produced within the cells and which are toxic to biological systems. This Candida albicans (Yeast) protein is Superoxide dismutase [Mn], mitochondrial (SOD2).